We begin with the raw amino-acid sequence, 291 residues long: Formamidopyrimidine-DNA glycosylase (291 aa).

Pro-2 (schiff-base intermediate with DNA) is an active-site residue. Glu-3 acts as the Proton donor in catalysis. Lys-58 acts as the Proton donor; for beta-elimination activity in catalysis. DNA-binding residues include His-100, Arg-123, and Lys-166. Residues 257 to 291 (SVYGREGKECLQCGTPIIRILQSGRSSFYCSQCQK) form an FPG-type zinc finger. Arg-281 serves as the catalytic Proton donor; for delta-elimination activity.

This sequence belongs to the FPG family. As to quaternary structure, monomer. It depends on Zn(2+) as a cofactor.

The catalysed reaction is Hydrolysis of DNA containing ring-opened 7-methylguanine residues, releasing 2,6-diamino-4-hydroxy-5-(N-methyl)formamidopyrimidine.. The enzyme catalyses 2'-deoxyribonucleotide-(2'-deoxyribose 5'-phosphate)-2'-deoxyribonucleotide-DNA = a 3'-end 2'-deoxyribonucleotide-(2,3-dehydro-2,3-deoxyribose 5'-phosphate)-DNA + a 5'-end 5'-phospho-2'-deoxyribonucleoside-DNA + H(+). In terms of biological role, involved in base excision repair of DNA damaged by oxidation or by mutagenic agents. Acts as a DNA glycosylase that recognizes and removes damaged bases. Has a preference for oxidized purines, such as 7,8-dihydro-8-oxoguanine (8-oxoG). Has AP (apurinic/apyrimidinic) lyase activity and introduces nicks in the DNA strand. Cleaves the DNA backbone by beta-delta elimination to generate a single-strand break at the site of the removed base with both 3'- and 5'-phosphates. In Bartonella tribocorum (strain CIP 105476 / IBS 506), this protein is Formamidopyrimidine-DNA glycosylase.